Consider the following 148-residue polypeptide: uncharacterized protein (148 aa).

In terms of domain architecture, HTH asnC-type spans 3-64 (IDDLDRKILS…KLNYEKLGYE (62 aa)). Residues 22–41 (YREIAKKLNVAVGTIYNRIK) constitute a DNA-binding region (H-T-H motif).

This is an uncharacterized protein from Pyrococcus furiosus (strain ATCC 43587 / DSM 3638 / JCM 8422 / Vc1).